A 610-amino-acid polypeptide reads, in one-letter code: Elongation factor 4 (610 aa).

The tr-type G domain occupies 11 to 193 (EKIRNFSIIA…QIVEKVPAPT (183 aa)). Residues 23–28 (DHGKST) and 140–143 (NKID) each bind GTP.

This sequence belongs to the TRAFAC class translation factor GTPase superfamily. Classic translation factor GTPase family. LepA subfamily.

Its subcellular location is the cell membrane. It carries out the reaction GTP + H2O = GDP + phosphate + H(+). Its function is as follows. Required for accurate and efficient protein synthesis under certain stress conditions. May act as a fidelity factor of the translation reaction, by catalyzing a one-codon backward translocation of tRNAs on improperly translocated ribosomes. Back-translocation proceeds from a post-translocation (POST) complex to a pre-translocation (PRE) complex, thus giving elongation factor G a second chance to translocate the tRNAs correctly. Binds to ribosomes in a GTP-dependent manner. The polypeptide is Elongation factor 4 (Streptococcus pyogenes serotype M1).